A 173-amino-acid chain; its full sequence is Co-chaperone protein HscB homolog (173 aa).

In terms of domain architecture, J spans 5 to 77 (SHFALFDLEP…SQRARYLLSL (73 aa)).

Belongs to the HscB family. In terms of assembly, interacts with HscA and stimulates its ATPase activity.

In terms of biological role, co-chaperone involved in the maturation of iron-sulfur cluster-containing proteins. Seems to help targeting proteins to be folded toward HscA. This Azotobacter vinelandii (strain DJ / ATCC BAA-1303) protein is Co-chaperone protein HscB homolog.